The chain runs to 181 residues: Large ribosomal subunit protein uL10 (181 aa).

This sequence belongs to the universal ribosomal protein uL10 family. Part of the ribosomal stalk of the 50S ribosomal subunit. The N-terminus interacts with L11 and the large rRNA to form the base of the stalk. The C-terminus forms an elongated spine to which L12 dimers bind in a sequential fashion forming a multimeric L10(L12)X complex.

Forms part of the ribosomal stalk, playing a central role in the interaction of the ribosome with GTP-bound translation factors. In Trichormus variabilis (strain ATCC 29413 / PCC 7937) (Anabaena variabilis), this protein is Large ribosomal subunit protein uL10.